The chain runs to 129 residues: Large-conductance mechanosensitive channel (129 aa).

Transmembrane regions (helical) follow at residues 10-30 and 76-96; these read FAVK…GAFG and GAFI…FGMV.

It belongs to the MscL family. As to quaternary structure, homopentamer.

It is found in the cell inner membrane. Its function is as follows. Channel that opens in response to stretch forces in the membrane lipid bilayer. May participate in the regulation of osmotic pressure changes within the cell. In Actinobacillus pleuropneumoniae serotype 5b (strain L20), this protein is Large-conductance mechanosensitive channel.